Here is a 222-residue protein sequence, read N- to C-terminus: Large ribosomal subunit protein uL4 (222 aa).

The disordered stretch occupies residues 67 to 87; it reads QKGTGNARAGSKRTNVRRGGG.

Belongs to the universal ribosomal protein uL4 family. Part of the 50S ribosomal subunit.

In terms of biological role, one of the primary rRNA binding proteins, this protein initially binds near the 5'-end of the 23S rRNA. It is important during the early stages of 50S assembly. It makes multiple contacts with different domains of the 23S rRNA in the assembled 50S subunit and ribosome. Its function is as follows. Forms part of the polypeptide exit tunnel. This chain is Large ribosomal subunit protein uL4, found in Rhodopirellula baltica (strain DSM 10527 / NCIMB 13988 / SH1).